A 374-amino-acid chain; its full sequence is uncharacterized protein (374 aa).

A signal peptide spans 1–26 (MNNLIKAYAAGVMSAAFLFGSEGRVR).

This is an uncharacterized protein from Treponema pallidum (strain Nichols).